Consider the following 207-residue polypeptide: NADH-quinone oxidoreductase subunit C (207 aa).

It belongs to the complex I 30 kDa subunit family. In terms of assembly, NDH-1 is composed of 14 different subunits. Subunits NuoB, C, D, E, F, and G constitute the peripheral sector of the complex.

It is found in the cell inner membrane. It catalyses the reaction a quinone + NADH + 5 H(+)(in) = a quinol + NAD(+) + 4 H(+)(out). Functionally, NDH-1 shuttles electrons from NADH, via FMN and iron-sulfur (Fe-S) centers, to quinones in the respiratory chain. The immediate electron acceptor for the enzyme in this species is believed to be ubiquinone. Couples the redox reaction to proton translocation (for every two electrons transferred, four hydrogen ions are translocated across the cytoplasmic membrane), and thus conserves the redox energy in a proton gradient. The polypeptide is NADH-quinone oxidoreductase subunit C (Rickettsia felis (strain ATCC VR-1525 / URRWXCal2) (Rickettsia azadi)).